The chain runs to 423 residues: Serine--tRNA ligase (423 aa).

L-serine is bound at residue 231–233 (TGE). 262–264 (RQE) lines the ATP pocket. Glu285 is a binding site for L-serine. 349-352 (EISS) lines the ATP pocket. Residue Ser385 coordinates L-serine.

The protein belongs to the class-II aminoacyl-tRNA synthetase family. Type-1 seryl-tRNA synthetase subfamily. In terms of assembly, homodimer. The tRNA molecule binds across the dimer.

The protein resides in the cytoplasm. It catalyses the reaction tRNA(Ser) + L-serine + ATP = L-seryl-tRNA(Ser) + AMP + diphosphate + H(+). The catalysed reaction is tRNA(Sec) + L-serine + ATP = L-seryl-tRNA(Sec) + AMP + diphosphate + H(+). Its pathway is aminoacyl-tRNA biosynthesis; selenocysteinyl-tRNA(Sec) biosynthesis; L-seryl-tRNA(Sec) from L-serine and tRNA(Sec): step 1/1. Functionally, catalyzes the attachment of serine to tRNA(Ser). Is also able to aminoacylate tRNA(Sec) with serine, to form the misacylated tRNA L-seryl-tRNA(Sec), which will be further converted into selenocysteinyl-tRNA(Sec). The protein is Serine--tRNA ligase of Phytoplasma mali (strain AT).